Reading from the N-terminus, the 299-residue chain is Ribonuclease H2 subunit A (299 aa).

Met-1 bears the N-acetylmethionine mark. In terms of domain architecture, RNase H type-2 spans 28 to 251 (PCVLGVDEAG…AQSILESEAE (224 aa)). 3 residues coordinate a divalent metal cation: Asp-34, Glu-35, and Asp-142. Residues Thr-205 and Thr-217 each carry the phosphothreonine modification. The interval 250-272 (AEDVKWEDSETGDPKGPGKIKSY) is disordered. At Ser-258 the chain carries Phosphoserine.

Belongs to the RNase HII family. Eukaryotic subfamily. As to quaternary structure, the RNase H2 complex is a heterotrimer composed of the catalytic subunit RNASEH2A and the non-catalytic subunits RNASEH2B and RNASEH2C. The cofactor is Mn(2+). Mg(2+) is required as a cofactor.

It is found in the nucleus. It carries out the reaction Endonucleolytic cleavage to 5'-phosphomonoester.. In terms of biological role, catalytic subunit of RNase HII, an endonuclease that specifically degrades the RNA of RNA:DNA hybrids. Participates in DNA replication, possibly by mediating the removal of lagging-strand Okazaki fragment RNA primers during DNA replication. Mediates the excision of single ribonucleotides from DNA:RNA duplexes. This is Ribonuclease H2 subunit A (RNASEH2A) from Bos taurus (Bovine).